A 591-amino-acid chain; its full sequence is F420 non-reducing hydrogenase II large subunit (591 aa).

Glu42 is a binding site for Mg(2+). Residues Cys61, Cys64, Cys569, and Cys572 each coordinate Ni(2+). Fe cation is bound at residue Cys64. A Fe cation-binding site is contributed by Cys572. His575 is a binding site for Mg(2+).

Belongs to the [NiFe]/[NiFeSe] hydrogenase large subunit family. In terms of assembly, composed of a large subunit (VhtA), a small subunit (VhtG) and a cytochrome subunit (VhtC). Ni(2+) is required as a cofactor. Fe cation serves as cofactor.

It localises to the cell membrane. It carries out the reaction methanophenazine + H2 = dihydromethanophenazine. In terms of biological role, part of the F420 non-reducing hydrogenase II complex that catalyzes the reduction of methanophenazine to dihydromethanophenazine. In Methanosarcina mazei (strain ATCC BAA-159 / DSM 3647 / Goe1 / Go1 / JCM 11833 / OCM 88) (Methanosarcina frisia), this protein is F420 non-reducing hydrogenase II large subunit.